The sequence spans 272 residues: Dermonecrotic toxin SpeSicTox-betaIB2a (272 aa).

H5 is an active-site residue. Positions 25 and 27 each coordinate Mg(2+). H41 (nucleophile) is an active-site residue. Cystine bridges form between C45–C51 and C47–C191. D85 contacts Mg(2+).

This sequence belongs to the arthropod phospholipase D family. Class II subfamily. The cofactor is Mg(2+). As to expression, expressed by the venom gland.

It localises to the secreted. The enzyme catalyses an N-(acyl)-sphingosylphosphocholine = an N-(acyl)-sphingosyl-1,3-cyclic phosphate + choline. It carries out the reaction an N-(acyl)-sphingosylphosphoethanolamine = an N-(acyl)-sphingosyl-1,3-cyclic phosphate + ethanolamine. It catalyses the reaction a 1-acyl-sn-glycero-3-phosphocholine = a 1-acyl-sn-glycero-2,3-cyclic phosphate + choline. The catalysed reaction is a 1-acyl-sn-glycero-3-phosphoethanolamine = a 1-acyl-sn-glycero-2,3-cyclic phosphate + ethanolamine. Dermonecrotic toxins cleave the phosphodiester linkage between the phosphate and headgroup of certain phospholipids (sphingolipid and lysolipid substrates), forming an alcohol (often choline) and a cyclic phosphate. This toxin acts on sphingomyelin (SM). It may also act on ceramide phosphoethanolamine (CPE), lysophosphatidylcholine (LPC) and lysophosphatidylethanolamine (LPE), but not on lysophosphatidylserine (LPS), and lysophosphatidylglycerol (LPG). It acts by transphosphatidylation, releasing exclusively cyclic phosphate products as second products. Induces dermonecrosis, hemolysis, increased vascular permeability, edema, inflammatory response, and platelet aggregation. This chain is Dermonecrotic toxin SpeSicTox-betaIB2a, found in Sicarius peruensis (Six-eyed sand spider).